Consider the following 158-residue polypeptide: NAD(P)H-quinone oxidoreductase subunit J, chloroplastic (158 aa).

The protein belongs to the complex I 30 kDa subunit family. In terms of assembly, NDH is composed of at least 16 different subunits, 5 of which are encoded in the nucleus.

It localises to the plastid. It is found in the chloroplast thylakoid membrane. The enzyme catalyses a plastoquinone + NADH + (n+1) H(+)(in) = a plastoquinol + NAD(+) + n H(+)(out). It catalyses the reaction a plastoquinone + NADPH + (n+1) H(+)(in) = a plastoquinol + NADP(+) + n H(+)(out). Its function is as follows. NDH shuttles electrons from NAD(P)H:plastoquinone, via FMN and iron-sulfur (Fe-S) centers, to quinones in the photosynthetic chain and possibly in a chloroplast respiratory chain. The immediate electron acceptor for the enzyme in this species is believed to be plastoquinone. Couples the redox reaction to proton translocation, and thus conserves the redox energy in a proton gradient. The sequence is that of NAD(P)H-quinone oxidoreductase subunit J, chloroplastic from Trachelium caeruleum (Blue throatwort).